The chain runs to 432 residues: Trigger factor (432 aa).

The region spanning 161 to 246 (GKRVSIDFVG…VNKVEARQLP (86 aa)) is the PPIase FKBP-type domain.

This sequence belongs to the FKBP-type PPIase family. Tig subfamily.

It localises to the cytoplasm. The catalysed reaction is [protein]-peptidylproline (omega=180) = [protein]-peptidylproline (omega=0). Functionally, involved in protein export. Acts as a chaperone by maintaining the newly synthesized protein in an open conformation. Functions as a peptidyl-prolyl cis-trans isomerase. The polypeptide is Trigger factor (Vibrio vulnificus (strain YJ016)).